Here is a 125-residue protein sequence, read N- to C-terminus: Glutaredoxin-C1 (125 aa).

Residues 19 to 119 (VNKAKEIVSA…PLLTEAGAIA (101 aa)) enclose the Glutaredoxin domain. Cys-39 and Cys-42 are oxidised to a cystine.

The protein belongs to the glutaredoxin family. CPYC subfamily.

Its subcellular location is the cytoplasm. Has a glutathione-disulfide oxidoreductase activity in the presence of NADPH and glutathione reductase. Reduces low molecular weight disulfides and proteins. The sequence is that of Glutaredoxin-C1 (GRXC1) from Arabidopsis thaliana (Mouse-ear cress).